The primary structure comprises 114 residues: T cell receptor beta variable 6-1 (114 aa).

A signal peptide spans 1-21 (MSIGLLCCVAFSLLWASPVNA). Positions 22–114 (GVTQTPKFQV…TSVYFCASSE (93 aa)) constitute an Ig-like domain. A disulfide bridge links Cys-42 with Cys-110. Asn-84 carries N-linked (GlcNAc...) asparagine glycosylation.

In terms of assembly, alpha-beta TR is a heterodimer composed of an alpha and beta chain; disulfide-linked. The alpha-beta TR is associated with the transmembrane signaling CD3 coreceptor proteins to form the TR-CD3 (TcR or TCR). The assembly of alpha-beta TR heterodimers with CD3 occurs in the endoplasmic reticulum where a single alpha-beta TR heterodimer associates with one CD3D-CD3E heterodimer, one CD3G-CD3E heterodimer and one CD247 homodimer forming a stable octameric structure. CD3D-CD3E and CD3G-CD3E heterodimers preferentially associate with TR alpha and TR beta chains, respectively. The association of the CD247 homodimer is the last step of TcR assembly in the endoplasmic reticulum and is required for transport to the cell surface.

Its subcellular location is the cell membrane. V region of the variable domain of T cell receptor (TR) beta chain that participates in the antigen recognition. Alpha-beta T cell receptors are antigen specific receptors which are essential to the immune response and are present on the cell surface of T lymphocytes. Recognize peptide-major histocompatibility (MH) (pMH) complexes that are displayed by antigen presenting cells (APC), a prerequisite for efficient T cell adaptive immunity against pathogens. Binding of alpha-beta TR to pMH complex initiates TR-CD3 clustering on the cell surface and intracellular activation of LCK that phosphorylates the ITAM motifs of CD3G, CD3D, CD3E and CD247 enabling the recruitment of ZAP70. In turn ZAP70 phosphorylates LAT, which recruits numerous signaling molecules to form the LAT signalosome. The LAT signalosome propagates signal branching to three major signaling pathways, the calcium, the mitogen-activated protein kinase (MAPK) kinase and the nuclear factor NF-kappa-B (NF-kB) pathways, leading to the mobilization of transcription factors that are critical for gene expression and essential for T cell growth and differentiation. The T cell repertoire is generated in the thymus, by V-(D)-J rearrangement. This repertoire is then shaped by intrathymic selection events to generate a peripheral T cell pool of self-MH restricted, non-autoaggressive T cells. Post-thymic interaction of alpha-beta TR with the pMH complexes shapes TR structural and functional avidity. The polypeptide is T cell receptor beta variable 6-1 (Homo sapiens (Human)).